A 468-amino-acid chain; its full sequence is Replication factor C large subunit (468 aa).

50–57 lines the ATP pocket; sequence GPPGSGKT. The tract at residues 422 to 456 is disordered; it reads EEKAVEEKVEEEEAEEEEEEERKEEEKPKAEKKKG. A compositionally biased stretch (acidic residues) spans 429-444; sequence KVEEEEAEEEEEEERK.

This sequence belongs to the activator 1 small subunits family. RfcL subfamily. As to quaternary structure, heteromultimer composed of small subunits (RfcS) and large subunits (RfcL).

Its function is as follows. Part of the RFC clamp loader complex which loads the PCNA sliding clamp onto DNA. In Pyrococcus horikoshii (strain ATCC 700860 / DSM 12428 / JCM 9974 / NBRC 100139 / OT-3), this protein is Replication factor C large subunit.